The primary structure comprises 228 residues: Non-fluorescent flavoprotein (228 aa).

Belongs to the bacterial luciferase oxidoreductase family. As to quaternary structure, homodimer. FMN is required as a cofactor.

This is Non-fluorescent flavoprotein (luxF) from Photobacterium leiognathi.